Here is a 365-residue protein sequence, read N- to C-terminus: Peptide chain release factor 2 (365 aa).

Residue Q252 is modified to N5-methylglutamine.

The protein belongs to the prokaryotic/mitochondrial release factor family. Post-translationally, methylated by PrmC. Methylation increases the termination efficiency of RF2.

It localises to the cytoplasm. In terms of biological role, peptide chain release factor 2 directs the termination of translation in response to the peptide chain termination codons UGA and UAA. This Escherichia coli O8 (strain IAI1) protein is Peptide chain release factor 2.